The primary structure comprises 491 residues: Protein SET DOMAIN GROUP 40 (491 aa).

Residues 36-278 form the SET domain; that stretch reads HSLSVSDFPD…LGEQVLLCYG (243 aa).

It belongs to the class V-like SAM-binding methyltransferase superfamily.

In Arabidopsis thaliana (Mouse-ear cress), this protein is Protein SET DOMAIN GROUP 40 (SDG40).